The following is a 380-amino-acid chain: MALRHLALLAGLLVGVASKSMENTVTRNSTAVINTQAEGTLSPPGLSSLPVVREWALTHTAQLPECCVDVVGVNASCPGASLCGPGCYRRWNADGSASCVRCGNGTLPAYNGSECRSFAGPGAPFPMNRSSGTPGRPHPGAPRVAASLFLGTFFISSGLILSVAGFFYLKRSSKLPRACYRRNKAPALQPGEAAAMIPPPQSSGNSSCRIPLWGFPSLGQSQGALWVCPQTGLPGSGSRPPLPGSPGDPPTRQGQGRIWLVPPALDLSWIWPAPPARPPLIPVTSMLFPVPETWGLQERRTHHDRADPQYLLLLEVQLHPRTDAAGLRQALLSSHRFSGAGSGGPKSQPVRKPRYVRRERPLDRATDPAAFPGEARISNV.

The signal sequence occupies residues 1 to 18; that stretch reads MALRHLALLAGLLVGVAS. 3 N-linked (GlcNAc...) asparagine glycosylation sites follow: N104, N111, and N128. Residues 148-168 traverse the membrane as a helical segment; that stretch reads LFLGTFFISSGLILSVAGFFY. 2 disordered regions span residues 229-256 and 336-380; these read PQTG…QGQG and RFSG…ISNV. Pro residues predominate over residues 240–249; sequence PPLPGSPGDP. Over residues 356 to 366 the composition is skewed to basic and acidic residues; sequence VRRERPLDRAT.

It localises to the membrane. This is an uncharacterized protein from Homo sapiens (Human).